The following is a 302-amino-acid chain: Glycine--tRNA ligase alpha subunit (302 aa).

This sequence belongs to the class-II aminoacyl-tRNA synthetase family. In terms of assembly, tetramer of two alpha and two beta subunits.

Its subcellular location is the cytoplasm. It carries out the reaction tRNA(Gly) + glycine + ATP = glycyl-tRNA(Gly) + AMP + diphosphate. The sequence is that of Glycine--tRNA ligase alpha subunit from Baumannia cicadellinicola subsp. Homalodisca coagulata.